We begin with the raw amino-acid sequence, 106 residues long: Follitropin subunit beta (106 aa).

6 disulfides stabilise this stretch: Cys1–Cys49, Cys15–Cys64, Cys18–Cys102, Cys26–Cys80, Cys30–Cys82, and Cys85–Cys92. Residues Asn5 and Asn22 are each glycosylated (N-linked (GlcNAc...) asparagine).

This sequence belongs to the glycoprotein hormones subunit beta family. Heterodimer. The active follitropin is a heterodimer composed of an alpha chain/CGA shared with other hormones and a unique beta chain/FSHB shown here.

It localises to the secreted. In terms of biological role, together with the alpha chain CGA constitutes follitropin, the follicle-stimulating hormone, and provides its biological specificity to the hormone heterodimer. Binds FSHR, a G protein-coupled receptor, on target cells to activate downstream signaling pathways. Follitropin is involved in follicle development and spermatogenesis in reproductive organs. This is Follitropin subunit beta (FSHB) from Struthio camelus (Common ostrich).